The following is a 649-amino-acid chain: Thioredoxin reductase 1, cytoplasmic (649 aa).

An N-acetylmethionine modification is found at Met-1. Residues 1 to 49 (MGCAEGKAVAAAAPTELQTKGKNGDGRRRSAKDHHPGKTLPENPAGFTS) form a disordered region. Residues 22–36 (KNGDGRRRSAKDHHP) show a composition bias toward basic and acidic residues. Positions 56–156 (RALLQAYIDG…KLLKMNGPED (101 aa)) constitute a Glutaredoxin domain. A required for interaction with ESR1 and ESR2 region spans residues 145–149 (LQKLL). FAD-binding positions include 172–173 (SG), 192–193 (DF), 208–209 (TC), and 213–217 (GCIPK). Cys-209 and Cys-214 are oxidised to a cystine. Lys-218 carries the N6-succinyllysine modification. At Tyr-281 the chain carries Phosphotyrosine. Residues 281 to 282 (YG) and Thr-311 contribute to the FAD site. NADP(+) contacts are provided by residues Arg-316, 348-354 (ASYVALE), 371-372 (RS), Arg-376, 376-378 (RGF), 442-443 (GR), and Lys-465. FAD is bound at residue Tyr-350. FAD-binding positions include Asp-484, 491-493 (ELT), and His-622. Glu-491 lines the NADP(+) pocket. The Proton acceptor role is filled by His-622. The segment at residues 647-648 (CU) is a cross-link (cysteinyl-selenocysteine (Cys-Sec)). Residue Sec-648 is a non-standard amino acid, selenocysteine.

It belongs to the class-I pyridine nucleotide-disulfide oxidoreductase family. In terms of assembly, homodimer. Interacts with HERC5. Interacts with ESR1 and ESR2. Requires FAD as cofactor. In terms of processing, the N-terminus is blocked. ISGylated. Expressed predominantly in Leydig cells (at protein level). Also expressed in ovary, spleen, heart, liver, kidney and pancreas and in a number of cancer cell lines. As to expression, widely expressed with highest levels in kidney, testis, uterus, ovary, prostate, placenta and fetal liver.

It is found in the cytoplasm. The protein localises to the nucleus. It carries out the reaction [thioredoxin]-dithiol + NADP(+) = [thioredoxin]-disulfide + NADPH + H(+). It catalyses the reaction H2O2 + NADPH + H(+) = NADP(+) + 2 H2O. Functionally, reduces disulfideprotein thioredoxin (Trx) to its dithiol-containing form. Homodimeric flavoprotein involved in the regulation of cellular redox reactions, growth and differentiation. Contains a selenocysteine residue at the C-terminal active site that is essential for catalysis. Also has reductase activity on hydrogen peroxide (H2O2). Induces actin and tubulin polymerization, leading to formation of cell membrane protrusions. In terms of biological role, enhances the transcriptional activity of estrogen receptors ESR1 and ESR2. Its function is as follows. Enhances the transcriptional activity of the estrogen receptor ESR2 only. Mediates cell death induced by a combination of interferon-beta and retinoic acid. The polypeptide is Thioredoxin reductase 1, cytoplasmic (Homo sapiens (Human)).